Here is a 281-residue protein sequence, read N- to C-terminus: Very long chain fatty acid elongase 7 (281 aa).

N-acetylalanine is present on Ala2. At 2–27 (AFSDLTSRTVRFYDNWIKDADPRVEN) the chain is on the lumenal side. Residues 28–48 (WLLMSSPLPQTIILGLYVYFV) form a helical membrane-spanning segment. Topologically, residues 49–72 (TSLGPKLMENRKPFELKKAMITYN) are cytoplasmic. A helical transmembrane segment spans residues 73-93 (FFIVLFSVYMCYEFVMSGWGT). Over 94-115 (GYSFRCDIVDYSQSPRAMRMVH) the chain is Lumenal. An intrachain disulfide couples Cys99 to Cys231. Residues 116–136 (TCWLYYFSKFIELFDTIFFVL) form a helical membrane-spanning segment. Lys124, Arg137, Lys139, Gln142, and His147 together coordinate 3-oxoeicosanoyl-CoA. The Cytoplasmic portion of the chain corresponds to 137–142 (RKKNSQ). The chain crosses the membrane as a helical span at residues 143–162 (VTFLHVFHHTIMPWTWWFGV). A HxxHH motif motif is present at residues 147-151 (HVFHH). Catalysis depends on His150, which acts as the Nucleophile. Residues 163–176 (KFAAGGLGTFHALL) are Lumenal-facing. Residues 177-197 (NTAVHVVMYFYYGLCAMGPAY) traverse the membrane as a helical segment. 3-oxoeicosanoyl-CoA-binding residues include Tyr187, Lys204, Thr208, and Gln211. Residues 198–206 (QKYLWWKKH) lie on the Cytoplasmic side of the membrane. Residues 207-227 (LTSLQLVQFVLVTVHIGQIFF) traverse the membrane as a helical segment. Topologically, residues 228–236 (MEDCNYQYP) are lumenal. The chain crosses the membrane as a helical span at residues 237–257 (VFLYIIMSYGCIFLLLFLHFW). Residues 258–281 (YRAYTKGQRLPKTMENGNCKSKHH) lie on the Cytoplasmic side of the membrane. 3-oxoeicosanoyl-CoA is bound at residue Arg266. Positions 277–281 (KSKHH) match the Di-lysine motif motif.

It belongs to the ELO family. ELOVL7 subfamily. In terms of assembly, homodimer. Interacts with TECR.

It localises to the endoplasmic reticulum membrane. The catalysed reaction is a very-long-chain acyl-CoA + malonyl-CoA + H(+) = a very-long-chain 3-oxoacyl-CoA + CO2 + CoA. The enzyme catalyses eicosanoyl-CoA + malonyl-CoA + H(+) = 3-oxodocosanoyl-CoA + CO2 + CoA. It carries out the reaction (5Z,8Z,11Z,14Z)-eicosatetraenoyl-CoA + malonyl-CoA + H(+) = (7Z,10Z,13Z,16Z)-3-oxodocosatetraenoyl-CoA + CO2 + CoA. It catalyses the reaction (6Z,9Z,12Z)-octadecatrienoyl-CoA + malonyl-CoA + H(+) = (8Z,11Z,14Z)-3-oxoeicosatrienoyl-CoA + CO2 + CoA. The catalysed reaction is (9Z,12Z)-octadecadienoyl-CoA + malonyl-CoA + H(+) = (11Z,14Z)-3-oxoicosa-11,14-dienoyl-CoA + CO2 + CoA. The enzyme catalyses (9Z)-octadecenoyl-CoA + malonyl-CoA + H(+) = 3-oxo-(11Z)-eicosenoyl-CoA + CO2 + CoA. It carries out the reaction octadecanoyl-CoA + malonyl-CoA + H(+) = 3-oxoeicosanoyl-CoA + CO2 + CoA. It catalyses the reaction hexadecanoyl-CoA + malonyl-CoA + H(+) = 3-oxooctadecanoyl-CoA + CO2 + CoA. The catalysed reaction is (9Z,12Z,15Z)-octadecatrienoyl-CoA + malonyl-CoA + H(+) = (11Z,14Z,17Z)-3-oxoeicosatrienoyl-CoA + CO2 + CoA. It functions in the pathway lipid metabolism; fatty acid biosynthesis. Its function is as follows. Catalyzes the first and rate-limiting reaction of the four reactions that constitute the long-chain fatty acids elongation cycle. This endoplasmic reticulum-bound enzymatic process allows the addition of 2 carbons to the chain of long- and very long-chain fatty acids (VLCFAs) per cycle. Condensing enzyme with higher activity toward C18 acyl-CoAs, especially C18:3(n-3) acyl-CoAs and C18:3(n-6)-CoAs. Also active toward C20:4-, C18:0-, C18:1-, C18:2- and C16:0-CoAs, and weakly toward C20:0-CoA. Little or no activity toward C22:0-, C24:0-, or C26:0-CoAs. May participate in the production of saturated and polyunsaturated VLCFAs of different chain lengths that are involved in multiple biological processes as precursors of membrane lipids and lipid mediators. The polypeptide is Very long chain fatty acid elongase 7 (Rattus norvegicus (Rat)).